Here is a 223-residue protein sequence, read N- to C-terminus: Endonuclease V (223 aa).

Residues Asp35 and Asp103 each coordinate Mg(2+).

It belongs to the endonuclease V family. Requires Mg(2+) as cofactor.

The protein resides in the cytoplasm. It catalyses the reaction Endonucleolytic cleavage at apurinic or apyrimidinic sites to products with a 5'-phosphate.. DNA repair enzyme involved in the repair of deaminated bases. Selectively cleaves double-stranded DNA at the second phosphodiester bond 3' to a deoxyinosine leaving behind the intact lesion on the nicked DNA. In Cronobacter sakazakii (strain ATCC BAA-894) (Enterobacter sakazakii), this protein is Endonuclease V.